Consider the following 446-residue polypeptide: Low-affinity gluconate transporter (446 aa).

Residue M1 is a topological domain, cytoplasmic. Residues 2 to 22 (TTLTLVLTAVGSVLLLLFLVM) form a helical membrane-spanning segment. The Periplasmic segment spans residues 23 to 26 (KARM). A helical transmembrane segment spans residues 27-47 (HAFLALMVVSMGAGLFSGMPL). The Cytoplasmic portion of the chain corresponds to 48–58 (DKIAATMEKGM). Residues 59 to 79 (GGTLGFLAVVVALGAMFGKIL) traverse the membrane as a helical segment. At 80 to 109 (HETGAVDQIAVKMLKSFGHSRAHYAIGLAG) the chain is on the periplasmic side. The helical transmembrane segment at 110 to 130 (LVCALPLFFEVAIVLLISVAF) threads the bilayer. Residues 131–142 (SMARHTGTNLVK) lie on the Cytoplasmic side of the membrane. Residues 143-163 (LVIPLFAGVAAAAAFLVPGPA) form a helical membrane-spanning segment. At 164–176 (PMLLASQMNADFG) the chain is on the periplasmic side. The chain crosses the membrane as a helical span at residues 177-197 (WMILIGLCAAIPGMIIAGPLW). The Cytoplasmic portion of the chain corresponds to 198-225 (GNFISRYVELHIPDDISEPHLGEGKMPS). The helical transmembrane segment at 226–246 (FGFSLSLILLPLVLVGLKTIA) threads the bilayer. The Periplasmic portion of the chain corresponds to 247 to 261 (ARFVPEGSTAYEWFE). A helical membrane pass occupies residues 262–282 (FIGHPFTAILVACLVAIYGLA). Residues 283-294 (MRQGMPKDKVME) are Cytoplasmic-facing. The helical transmembrane segment at 295-315 (ICGHALQPAGIILLVIGAGGV) threads the bilayer. Topologically, residues 316-330 (FKQVLVDSGVGPALG) are periplasmic. The helical transmembrane segment at 331 to 351 (EALTGMGLPIAITCFVLAAAV) threads the bilayer. R352 is a topological domain (cytoplasmic). The chain crosses the membrane as a helical span at residues 353 to 373 (IIQGSATVACLTAVGLVMPVI). Topologically, residues 374–387 (EQLNYSGAQMAALS) are periplasmic. The helical transmembrane segment at 388–408 (ICIAGGSIVVSHVNDAGFWLF) threads the bilayer. Topologically, residues 409–424 (GKFTGATEAETLKTWT) are cytoplasmic. The helical transmembrane segment at 425-445 (MMETILGTVGAIVGMIAFQLL) threads the bilayer. A topological domain (periplasmic) is located at residue S446.

This sequence belongs to the GntP permease family.

Its subcellular location is the cell inner membrane. In terms of biological role, part of the gluconate utilization system Gnt-I; low-affinity intake of gluconate. The sequence is that of Low-affinity gluconate transporter (gntU) from Escherichia coli O157:H7.